A 72-amino-acid polypeptide reads, in one-letter code: Translation initiation factor IF-1 (72 aa).

Residues 1 to 72 (MARDDVIEVD…DRGRITFRYK (72 aa)) form the S1-like domain.

Belongs to the IF-1 family. As to quaternary structure, component of the 30S ribosomal translation pre-initiation complex which assembles on the 30S ribosome in the order IF-2 and IF-3, IF-1 and N-formylmethionyl-tRNA(fMet); mRNA recruitment can occur at any time during PIC assembly.

It is found in the cytoplasm. One of the essential components for the initiation of protein synthesis. Stabilizes the binding of IF-2 and IF-3 on the 30S subunit to which N-formylmethionyl-tRNA(fMet) subsequently binds. Helps modulate mRNA selection, yielding the 30S pre-initiation complex (PIC). Upon addition of the 50S ribosomal subunit IF-1, IF-2 and IF-3 are released leaving the mature 70S translation initiation complex. This chain is Translation initiation factor IF-1, found in Helicobacter acinonychis (strain Sheeba).